The following is a 306-amino-acid chain: 3-methyl-2-oxobutanoate hydroxymethyltransferase (306 aa).

Residues Asp-53 and Asp-96 each coordinate Mg(2+). Residues Asp-53–Ser-54, Asp-96, and Lys-126 contribute to the 3-methyl-2-oxobutanoate site. Glu-128 is a binding site for Mg(2+). Glu-195 serves as the catalytic Proton acceptor.

This sequence belongs to the PanB family. Homodecamer; pentamer of dimers. It depends on Mg(2+) as a cofactor.

It localises to the cytoplasm. The enzyme catalyses 3-methyl-2-oxobutanoate + (6R)-5,10-methylene-5,6,7,8-tetrahydrofolate + H2O = 2-dehydropantoate + (6S)-5,6,7,8-tetrahydrofolate. The protein operates within cofactor biosynthesis; (R)-pantothenate biosynthesis; (R)-pantoate from 3-methyl-2-oxobutanoate: step 1/2. Catalyzes the reversible reaction in which hydroxymethyl group from 5,10-methylenetetrahydrofolate is transferred onto alpha-ketoisovalerate to form ketopantoate. This chain is 3-methyl-2-oxobutanoate hydroxymethyltransferase, found in Anaeromyxobacter sp. (strain K).